A 46-amino-acid polypeptide reads, in one-letter code: Aspartate aminotransferase 1 (46 aa).

Belongs to the class-I pyridoxal-phosphate-dependent aminotransferase family. As to quaternary structure, homodimer. Requires pyridoxal 5'-phosphate as cofactor.

It catalyses the reaction L-aspartate + 2-oxoglutarate = oxaloacetate + L-glutamate. In terms of biological role, important for the metabolism of amino acids and Krebs-cycle related organic acids. In plants, it is involved in nitrogen metabolism and in aspects of carbon and energy metabolism. In Pseudotsuga menziesii (Douglas-fir), this protein is Aspartate aminotransferase 1.